A 182-amino-acid chain; its full sequence is Protein Syd (182 aa).

Belongs to the Syd family.

Its subcellular location is the cell inner membrane. Interacts with the SecY protein in vivo. May bind preferentially to an uncomplexed state of SecY, thus functioning either as a chelating agent for excess SecY in the cell or as a regulatory factor that negatively controls the translocase function. In Pectobacterium carotovorum subsp. carotovorum (strain PC1), this protein is Protein Syd.